A 270-amino-acid chain; its full sequence is Acetylglutamate kinase (270 aa).

Residues 53 to 54, Arg75, and Asn167 each bind substrate; that span reads GG.

It belongs to the acetylglutamate kinase family. ArgB subfamily.

Its subcellular location is the cytoplasm. It carries out the reaction N-acetyl-L-glutamate + ATP = N-acetyl-L-glutamyl 5-phosphate + ADP. It participates in amino-acid biosynthesis; L-arginine biosynthesis; N(2)-acetyl-L-ornithine from L-glutamate: step 2/4. Catalyzes the ATP-dependent phosphorylation of N-acetyl-L-glutamate. The polypeptide is Acetylglutamate kinase (Shewanella halifaxensis (strain HAW-EB4)).